Reading from the N-terminus, the 61-residue chain is GRRPCCNECGICDRSLDPMCICEDLVPQCHEGCQACEEVDTGTPMYQCRSFEYYHCGTPCL.

6 disulfides stabilise this stretch: Cys-5/Cys-60, Cys-6/Cys-22, Cys-9/Cys-56, Cys-12/Cys-20, Cys-29/Cys-36, and Cys-33/Cys-48.

Belongs to the Bowman-Birk serine protease inhibitor family. In terms of tissue distribution, expressed in bulb (at protein level).

Functionally, serine protease inhibitor. Inhibits trypsin (Ki = 41 nM) and weakly inhibits chymotrypsin (Ki = 410 nM). Does not inhibit bacterial subtilisin. This chain is Bowman-Birk type proteinase inhibitor B5, found in Hyacinthus orientalis (Common hyacinth).